Consider the following 1153-residue polypeptide: Bifunctional dioxygenase (DOX)-epoxy alcohol synthase (EAS) (1153 aa).

Over residues 46-56 (SSKESPSRKSS) the composition is skewed to low complexity. The tract at residues 46 to 113 (SSKESPSRKS…TQHGDGTYPT (68 aa)) is disordered. Over residues 57–74 (TIGQSTRNGSCQADTQKG) the composition is skewed to polar residues. Over residues 81–98 (EKPKPVKENPMKKLKEMS) the composition is skewed to basic and acidic residues. The segment at 177 to 525 (TDSLINELWE…DGKFDDDDLV (349 aa)) is fatty acid alpha-dioxygenase. Histidine 276 is a binding site for heme b. The active site involves tyrosine 454. Histidine 457 is a heme b binding site. The tract at residues 732 to 1153 (RVNITSYGGA…VTMRVMWDDE (422 aa)) is epoxy alcohol synthase. Cysteine 1086 contributes to the heme binding site.

This sequence in the N-terminal section; belongs to the peroxidase family. It in the C-terminal section; belongs to the cytochrome P450 family. As to quaternary structure, homotetramer. Requires heme b as cofactor. The cofactor is heme.

The enzyme catalyses (9Z)-octadecenoate + O2 = (8R)-hydroperoxy-(9Z)-octadecenoate. It carries out the reaction (9Z)-octadecenoate + O2 = 10-hydroperoxy-(8E)-octadecenoate. It catalyses the reaction (9Z,12Z)-octadecadienoate + O2 = (8E,10R,12Z)-10-hydroperoxyoctadeca-8,12-dienoate. The catalysed reaction is (9Z,12Z,15Z)-octadecatrienoate + O2 = (10R)-hydroperoxy-(8E,12Z,15Z)-octadecatrienoate. The enzyme catalyses (9Z,12Z,15Z)-octadecatrienoate + O2 = (8R)-hydroperoxy-(9Z,12Z,15Z)-octadecatrienoate. It carries out the reaction (11Z,14Z)-eicosadienoate + O2 = 12-hydroperoxy-(10E,14Z)-eicosadienoate. It catalyses the reaction (11Z,14Z,17Z)-eicosatrienoate + O2 = 12-hydroperoxy-(10E,14Z,17Z)-eicosatrienoate. The catalysed reaction is (12R,13S)-epoxy-(9Z)-octadecenoate + O2 = (12R,13S)-epoxy-(10R)-hydroperoxy-(8E)-octadecenoate. The enzyme catalyses (8E,10R,12Z)-10-hydroperoxyoctadeca-8,12-dienoate = (12S,13R)-epoxy-(10R)-hydroxy-(8E)-octadecenoate. It carries out the reaction (10R)-hydroperoxy-(8E,12Z,15Z)-octadecatrienoate = 12,13-epoxy-(10R)-hydroxy-(8E,15Z)-octadecadienoate. It catalyses the reaction 12-hydroperoxy-(10E,14Z)-eicosadienoate = 10,11-epoxy-12-hydroxy-(14Z)-eicosenoate. The catalysed reaction is 12-hydroperoxy-(10E,14Z,17Z)-eicosatrienoate = 14,15-epoxy-12-hydroxy-(10E,17Z)-eicosadienoate. The enzyme catalyses (13R)-hydroperoxy-(9Z,11E)-octadecadienoate = (12R,13R)-epoxy-(11S)-hydroxy-(9Z)-octadecenoate. It carries out the reaction (13S)-hydroperoxy-(9Z,11E)-octadecadienoate = (12R,13R)-epoxy-(11S)-hydroxy-(9Z)-octadecenoate. It catalyses the reaction 12-hydroperoxy-(10E,14Z)-eicosadienoate = 14,15-epoxy-12-hydroxy-(10E)-eicosenoate. The catalysed reaction is 12-hydroperoxy-(10E,14Z,17Z)-eicosatrienoate = 10,11-epoxy-12-hydroxy-(14Z,17Z)-eicosadienoate. Bifunctional dioxygenase (DOX)-epoxy alcohol synthase (EAS) that converts linoleic acid (18:2n-6) sequentially to 10(R)-hydroperoxy-8(E),12(Z)-octadecadienoic acid (10R-HPODE) and 10R-HPODE further to 12 S(13R)-epoxy-10(R)-hydroxy-8(E)-octadecenoic acid as the end product. Oxygenation at C-10 occurs by retention of the pro-R hydrogen of C-8 of 18:2n-6, suggesting antarafacial hydrogen abstraction and oxygenation. The epoxy alcohol is formed from 10R-HPODE, likely by heterolytic cleavage of the dioxygen bond and subsequent intramolecular epoxidation of the 12(Z) double bond. The DOX domain is also able to oxygenate position C-8 of linoleic acid to produce 8(R)-hydroperoxy-8(E),12(Z)-octadecadienoic acid (8R-HPODE). Moreover, the DOX domain can oxygenate alpha-linolenic acid (18:3n-3) at C-8 or C-10 to produce respectively 8HOTrE and 10HOTrE, oleic acid (18:1n-9) at C-8 or C-10 to produce respectively 8-H(P)OME and 10-H(P)OME (with 8R stereoisomer to over 95%), eicosadienoic acid (20:2n-6) at C-10 or C-12 to produce respectively 10(11)-epoxy-12-hydroxy-14(Z)-eicosenoic acid and 14(15)-epoxy-12-hydroxy-10(E)-eicosenoic acid, as well as eicosatrienoic acid (20:3n-3) at C-10 or C-12 to produce respectively 10(11)-epoxy-12-hydroxy-14(Z),17(Z)-eicosadienoic acid and 14(15)-epoxy-12-hydroxy-14(Z),17(Z)-eicosadienoic acid. On the other side, the enzyme EAS domain can also catalyze the conversion of 10HOTrE into 12(13)-epoxy-10(R)-hydroxy-8(E),15(Z)-octadecadienoic acid, 13-R-HPODE into the stereoisomers of 12(13)-epoxy-11-hydroxy-9(Z)-octadecenoic acids (erythro/threo, 1:4), as well as 13S-HPODE into the stereoisomers of 12(13)-epoxy-11-hydroxy-9(Z)-octadecenoic acids (erythro/threo, 1:4) (EAS activity). Gamma-linolenic acid (18:3n-6) is not a substrate. In Pyricularia oryzae (strain 70-15 / ATCC MYA-4617 / FGSC 8958) (Rice blast fungus), this protein is Bifunctional dioxygenase (DOX)-epoxy alcohol synthase (EAS).